Consider the following 918-residue polypeptide: Exostosin-like 3 (918 aa).

The Cytoplasmic segment spans residues 1–30; it reads MTGYTMLRNGGVGNGGQTCMLRWSNRIRLT. The segment at 1-140 is required for interaction with REG3A; it reads MTGYTMLRNG…LKNVISQTEH (140 aa). A helical; Signal-anchor for type II membrane protein membrane pass occupies residues 31–51; sequence WLSFTLFIILVFFPLIAHYYL. Topologically, residues 52–918 are lumenal; that stretch reads TTLDEADEAG…HDKTKCFKFI (867 aa). Disulfide bonds link cysteine 177-cysteine 182 and cysteine 188-cysteine 236. N-linked (GlcNAc...) asparagine glycosylation occurs at asparagine 290. Position 361 is a phosphoserine (serine 361). A disulfide bridge connects residues cysteine 399 and cysteine 414. The N-linked (GlcNAc...) asparagine glycan is linked to asparagine 591. The UDP-N-acetyl-alpha-D-glucosamine site is built by leucine 667, arginine 671, asparagine 696, asparagine 722, arginine 727, aspartate 743, aspartate 744, and aspartate 745. Aspartate 745 provides a ligand contact to Mn(2+). Asparagine 789 carries N-linked (GlcNAc...) asparagine glycosylation. Cysteine 830 and cysteine 878 form a disulfide bridge. UDP-N-acetyl-alpha-D-glucosamine-binding residues include glutamate 831, aspartate 832, and arginine 875. Aspartate 832 is a catalytic residue.

This sequence belongs to the glycosyltransferase 47 family. Homodimer; disulfide-linked. Interacts with REG3A. It depends on Mn(2+) as a cofactor. In terms of tissue distribution, expressed in pancreatic islet beta-cells. Expressed in lung epithelial cells. Expressed in microglia.

The protein localises to the endoplasmic reticulum membrane. The protein resides in the golgi apparatus. It is found in the cell membrane. It localises to the nucleus. It catalyses the reaction 3-O-(beta-D-GlcA-(1-&gt;3)-beta-D-Gal-(1-&gt;3)-beta-D-Gal-(1-&gt;4)-beta-D-Xyl)-L-seryl-[protein] + UDP-N-acetyl-alpha-D-glucosamine = 3-O-(alpha-D-GlcNAc-(1-&gt;4)-beta-D-GlcA-(1-&gt;3)-beta-D-Gal-(1-&gt;3)-beta-D-Gal-(1-&gt;4)-beta-D-Xyl)-L-seryl-[protein] + UDP + H(+). Its pathway is glycan metabolism; heparan sulfate biosynthesis. In terms of biological role, glycosyltransferase which regulates the biosynthesis of heparan sulfate (HS). Initiates HS synthesis by transferring the first N-acetyl-alpha-D-glucosamine (alpha-GlcNAc) residue (GlcNAcT-I activity) to the tetrasaccharide linker (GlcA-Gal-Gal-Xyl-)Ser core linker. May also transfer alpha-GlcNAc residues during HS elongation (GlcNAcT-II activity). Lacks glucuronyl transferase II (GlcAT-II) activity. Important for both skeletal development and hematopoiesis, through the formation of HS proteoglycans (HSPGs). Through the synthesis of HS, regulates postnatal pancreatic islet maturation and insulin secretion. Receptor for REG3A, REG3B and REG3G, induces the activation of downstream signaling pathways such as PI3K-AKT or RAS-RAF-MEK-ERK signaling pathway. Required for the function of REG3A in regulating keratinocyte proliferation and differentiation. Required for the inhibition of skin inflammation mediated by REG3A through the activation of PI3K-AKT-STAT3 pathway. Required for the function of REG3A and REG3G in glucose tolerance in pancreas. Expressed in microglia, is activated by nociceptor-derived REG3G in response to endotoxins, leading to the inhibition of kynurenine pathway to prevent endotoxic death. In Mus musculus (Mouse), this protein is Exostosin-like 3.